The primary structure comprises 242 residues: MISDINALKYKKVLLKVSGEALMGDKQFGHEYDVIKKIAGDIKEVINLGVEVAIVVGGGNIYRGINASLVGMDRASADYIGMLATMINALTLQNVMESLNIYTRVLSAIPMMSVCEPYIRRKAKRHMEKKRVVIFAGGTGNPFCTTDSAAVLRAIEMNCDILLKATQVDGVYDSDPKKNPDAKKYFTISYKDVITNSLQVMDTAAIAVARENKLPIRVFSIKEQGNFARVIQDKGEYTTIEE.

Position 16–19 (16–19) interacts with ATP; it reads KVSG. Gly58 is a binding site for UMP. The ATP site is built by Gly59 and Arg63. Residues Asp78 and 139–146 contribute to the UMP site; that span reads TGNPFCTT. Residues Thr166, Gln167, Tyr172, and Asp175 each contribute to the ATP site.

It belongs to the UMP kinase family. As to quaternary structure, homohexamer.

The protein localises to the cytoplasm. It catalyses the reaction UMP + ATP = UDP + ADP. The protein operates within pyrimidine metabolism; CTP biosynthesis via de novo pathway; UDP from UMP (UMPK route): step 1/1. Inhibited by UTP. Functionally, catalyzes the reversible phosphorylation of UMP to UDP. In Rickettsia massiliae (strain Mtu5), this protein is Uridylate kinase.